Reading from the N-terminus, the 236-residue chain is Sensory rhodopsin I (236 aa).

7 helical membrane-spanning segments follow: residues 6–26, 37–57, 74–94, 98–118, 126–146, 167–187, and 192–212; these read VVYG…GFLY, ILAA…AMVF, YLDW…TAGA, AIFG…GAVV, ALFG…YLIF, VGLL…GLGF, and GVSI…VYFF. N6-(retinylidene)lysine is present on Lys205.

The protein belongs to the archaeal/bacterial/fungal opsin family. Interacts with Htr1. Post-translationally, the covalent binding of retinal to the apoprotein, bacterioopsin, generates bacteriorhodopsin.

Its subcellular location is the membrane. Functionally, photoattractant rhodopsin. This is Sensory rhodopsin I (sop1) from Haloarcula marismortui (strain ATCC 43049 / DSM 3752 / JCM 8966 / VKM B-1809) (Halobacterium marismortui).